A 192-amino-acid polypeptide reads, in one-letter code: Bifunctional protein PyrR (192 aa).

The PRPP-binding signature appears at 107-119 (VVLVDDVLFSGRT).

The protein belongs to the purine/pyrimidine phosphoribosyltransferase family. PyrR subfamily.

It catalyses the reaction UMP + diphosphate = 5-phospho-alpha-D-ribose 1-diphosphate + uracil. Regulates the transcription of the pyrimidine nucleotide (pyr) operon in response to exogenous pyrimidines. Functionally, also displays a weak uracil phosphoribosyltransferase activity which is not physiologically significant. The protein is Bifunctional protein PyrR of Corynebacterium efficiens (strain DSM 44549 / YS-314 / AJ 12310 / JCM 11189 / NBRC 100395).